We begin with the raw amino-acid sequence, 323 residues long: Cell division protein ZipA (323 aa).

Residues 1 to 4 lie on the Periplasmic side of the membrane; it reads MDLN. A helical transmembrane segment spans residues 5 to 25; it reads TILIILGIIALIILVVHGLWA. Residues 26–323 lie on the Cytoplasmic side of the membrane; sequence NRREKSQYFK…AEKAYLDKVR (298 aa). The disordered stretch occupies residues 44 to 73; that stretch reads SRLREPPAHIQSASEEKKDANTSTPTAEVS.

This sequence belongs to the ZipA family. Interacts with FtsZ via their C-terminal domains.

It is found in the cell inner membrane. Essential cell division protein that stabilizes the FtsZ protofilaments by cross-linking them and that serves as a cytoplasmic membrane anchor for the Z ring. Also required for the recruitment to the septal ring of downstream cell division proteins. The chain is Cell division protein ZipA from Pasteurella multocida (strain Pm70).